The sequence spans 326 residues: Beta-ketoacyl-[acyl-carrier-protein] synthase III (326 aa).

Catalysis depends on residues Cys-112 and His-251. The interval 252 to 256 (QANSR) is ACP-binding. Asn-281 is a catalytic residue.

It belongs to the thiolase-like superfamily. FabH family. Homodimer.

The protein localises to the cytoplasm. It catalyses the reaction malonyl-[ACP] + acetyl-CoA + H(+) = 3-oxobutanoyl-[ACP] + CO2 + CoA. The protein operates within lipid metabolism; fatty acid biosynthesis. Catalyzes the condensation reaction of fatty acid synthesis by the addition to an acyl acceptor of two carbons from malonyl-ACP. Catalyzes the first condensation reaction which initiates fatty acid synthesis and may therefore play a role in governing the total rate of fatty acid production. Possesses both acetoacetyl-ACP synthase and acetyl transacylase activities. Its substrate specificity determines the biosynthesis of branched-chain and/or straight-chain of fatty acids. This is Beta-ketoacyl-[acyl-carrier-protein] synthase III from Clostridium botulinum (strain Langeland / NCTC 10281 / Type F).